Reading from the N-terminus, the 141-residue chain is Hemoglobin subunit alpha (141 aa).

Positions 1–141 (VLSPADKTNV…VSTVLTSKYR (141 aa)) constitute a Globin domain. Residue serine 3 is modified to Phosphoserine. The residue at position 7 (lysine 7) is an N6-succinyllysine. Threonine 8 is subject to Phosphothreonine. Lysine 11 bears the N6-succinyllysine mark. Residue lysine 16 is modified to N6-acetyllysine; alternate. Lysine 16 carries the N6-succinyllysine; alternate modification. Phosphotyrosine is present on tyrosine 24. Residue serine 35 is modified to Phosphoserine. Lysine 40 is modified (N6-succinyllysine). The residue at position 49 (serine 49) is a Phosphoserine. Residue histidine 58 participates in O2 binding. Histidine 87 contributes to the heme b binding site. Residue serine 102 is modified to Phosphoserine. Residue threonine 108 is modified to Phosphothreonine. A phosphoserine mark is found at serine 124 and serine 131. Residues threonine 134 and threonine 137 each carry the phosphothreonine modification. Serine 138 carries the post-translational modification Phosphoserine.

Belongs to the globin family. In terms of assembly, heterotetramer of two alpha chains and two beta chains. In terms of tissue distribution, red blood cells.

Its function is as follows. Involved in oxygen transport from the lung to the various peripheral tissues. In terms of biological role, hemopressin acts as an antagonist peptide of the cannabinoid receptor CNR1. Hemopressin-binding efficiently blocks cannabinoid receptor CNR1 and subsequent signaling. The polypeptide is Hemoglobin subunit alpha (HBA) (Cebus capucinus (White-faced sapajou)).